A 156-amino-acid chain; its full sequence is 3-hydroxyacyl-[acyl-carrier-protein] dehydratase FabZ (156 aa).

H50 is an active-site residue.

The protein belongs to the thioester dehydratase family. FabZ subfamily.

It localises to the cytoplasm. The catalysed reaction is a (3R)-hydroxyacyl-[ACP] = a (2E)-enoyl-[ACP] + H2O. Its function is as follows. Involved in unsaturated fatty acids biosynthesis. Catalyzes the dehydration of short chain beta-hydroxyacyl-ACPs and long chain saturated and unsaturated beta-hydroxyacyl-ACPs. This chain is 3-hydroxyacyl-[acyl-carrier-protein] dehydratase FabZ, found in Janthinobacterium sp. (strain Marseille) (Minibacterium massiliensis).